Consider the following 1825-residue polypeptide: Proteasome activator complex subunit 4B (1825 aa).

HEAT repeat units follow at residues 458–502 (PEGP…LVDC), 981–1020 (NFCCRDITPRVLEFLEPTRTDVTQQQFKGALYCLLGNHCG), 1162–1200 (YPLPAPAVFFFVQSLNHDALVVRKMAIAAVAGILKQLKR), 1336–1374 (DAFLPVLKPHMERLANDSHESTQRCVAEIIAGLIRGSKH), 1618–1656 (PEQIPMVLAVLHEIAGSSSWHARYSVLTYLQTMVFYNLF), and 1662–1700 (EQCVQGVRALVIRLLEDEQLEVREMAATTLSGFLQCNFL). A bromodomain-like (BRDL) region spans residues 1632–1720 (AGSSSWHARY…EALCKTRLPK (89 aa)).

This sequence belongs to the BLM10 family. As to quaternary structure, homodimer. Interacts with the 20S and 26S proteasomes.

Its subcellular location is the cytoplasm. The protein resides in the cytosol. It is found in the nucleus. The protein localises to the nucleus speckle. Associated component of the proteasome that specifically recognizes acetylated histones and promotes ATP- and ubiquitin-independent degradation of core histones during DNA damage response. Recognizes and binds acetylated histones via its bromodomain-like (BRDL) region and activates the proteasome by opening the gated channel for substrate entry. Binds to the core proteasome via its C-terminus, which occupies the same binding sites as the proteasomal ATPases, opening the closed structure of the proteasome via an active gating mechanism. involved in DNA damage response in somatic cells: binds to acetylated histones and promotes degradation of histones. The polypeptide is Proteasome activator complex subunit 4B (psme4b) (Danio rerio (Zebrafish)).